A 298-amino-acid chain; its full sequence is GTPase Era (298 aa).

The region spanning 3-170 (KSGFVTIVGR…VELMKKAMPE (168 aa)) is the Era-type G domain. Residues 11–18 (GRPNVGKS) form a G1 region. A GTP-binding site is contributed by 11–18 (GRPNVGKS). Positions 37–41 (QTTRN) are G2. Positions 58 to 61 (DTPG) are G3. GTP is bound by residues 58–62 (DTPGI) and 120–123 (NKVD). Residues 120 to 123 (NKVD) form a G4 region. Positions 149 to 151 (ISA) are G5. The KH type-2 domain maps to 201-278 (LRDEVPHGIA…NLKIWVKVRK (78 aa)).

The protein belongs to the TRAFAC class TrmE-Era-EngA-EngB-Septin-like GTPase superfamily. Era GTPase family. Monomer.

The protein localises to the cytoplasm. It localises to the cell membrane. Its function is as follows. An essential GTPase that binds both GDP and GTP, with rapid nucleotide exchange. Plays a role in 16S rRNA processing and 30S ribosomal subunit biogenesis and possibly also in cell cycle regulation and energy metabolism. This Clostridium beijerinckii (strain ATCC 51743 / NCIMB 8052) (Clostridium acetobutylicum) protein is GTPase Era.